We begin with the raw amino-acid sequence, 1279 residues long: ATP-dependent helicase/nuclease subunit A (1279 aa).

One can recognise a UvrD-like helicase ATP-binding domain in the interval 4–499; sequence TKWTDEQRQA…VKLFKNFRSR (496 aa). Position 25-32 (25-32) interacts with ATP; the sequence is AGAGAGKT. A UvrD-like helicase C-terminal domain is found at 526 to 853; that stretch reads EEALKVGASY…RIMSIHKSKG (328 aa).

This sequence belongs to the helicase family. AddA subfamily. As to quaternary structure, heterodimer of AddA and AddB/RexB. Mg(2+) serves as cofactor.

The catalysed reaction is Couples ATP hydrolysis with the unwinding of duplex DNA by translocating in the 3'-5' direction.. It carries out the reaction ATP + H2O = ADP + phosphate + H(+). In terms of biological role, the heterodimer acts as both an ATP-dependent DNA helicase and an ATP-dependent, dual-direction single-stranded exonuclease. Recognizes the chi site generating a DNA molecule suitable for the initiation of homologous recombination. The AddA nuclease domain is required for chi fragment generation; this subunit has the helicase and 3' -&gt; 5' nuclease activities. This Clostridium botulinum (strain Langeland / NCTC 10281 / Type F) protein is ATP-dependent helicase/nuclease subunit A.